The chain runs to 839 residues: Periplasmic nitrate reductase (839 aa).

A signal peptide (tat-type signal) is located at residues 1–34 (MTLTRRDFIKANAAAAAATAAAVNLPLVPSMAQA). In terms of domain architecture, 4Fe-4S Mo/W bis-MGD-type spans 46–102 (IKWDKAACRFCGTGCSVLVGTKGGRVVATQGDPDAPVNRGLNCIKGYFLSKIMYGED). [4Fe-4S] cluster-binding residues include Cys-53, Cys-56, Cys-60, and Cys-88. Mo-bis(molybdopterin guanine dinucleotide) is bound by residues Lys-90, Gln-157, Asn-182, Cys-186, 219–226 (WGSNMAEM), 250–254 (STYEH), 269–271 (QTD), Met-379, Gln-383, Asn-489, 515–516 (SD), Lys-538, Asp-565, and 729–738 (TGRVLEHWHT). A substrate-binding site is contributed by Phe-805. The Mo-bis(molybdopterin guanine dinucleotide) site is built by Asn-813 and Lys-830.

This sequence belongs to the prokaryotic molybdopterin-containing oxidoreductase family. NasA/NapA/NarB subfamily. Component of the periplasmic nitrate reductase NapAB complex composed of NapA and NapB. Requires [4Fe-4S] cluster as cofactor. It depends on Mo-bis(molybdopterin guanine dinucleotide) as a cofactor. In terms of processing, predicted to be exported by the Tat system. The position of the signal peptide cleavage has not been experimentally proven.

The protein localises to the periplasm. The catalysed reaction is 2 Fe(II)-[cytochrome] + nitrate + 2 H(+) = 2 Fe(III)-[cytochrome] + nitrite + H2O. In terms of biological role, catalytic subunit of the periplasmic nitrate reductase complex NapAB. Receives electrons from NapB and catalyzes the reduction of nitrate to nitrite. This is Periplasmic nitrate reductase from Laribacter hongkongensis (strain HLHK9).